Here is a 178-residue protein sequence, read N- to C-terminus: ATP synthase subunit delta (178 aa).

It belongs to the ATPase delta chain family. In terms of assembly, F-type ATPases have 2 components, F(1) - the catalytic core - and F(0) - the membrane proton channel. F(1) has five subunits: alpha(3), beta(3), gamma(1), delta(1), epsilon(1). F(0) has three main subunits: a(1), b(2) and c(10-14). The alpha and beta chains form an alternating ring which encloses part of the gamma chain. F(1) is attached to F(0) by a central stalk formed by the gamma and epsilon chains, while a peripheral stalk is formed by the delta and b chains.

It localises to the cell inner membrane. Its function is as follows. F(1)F(0) ATP synthase produces ATP from ADP in the presence of a proton or sodium gradient. F-type ATPases consist of two structural domains, F(1) containing the extramembraneous catalytic core and F(0) containing the membrane proton channel, linked together by a central stalk and a peripheral stalk. During catalysis, ATP synthesis in the catalytic domain of F(1) is coupled via a rotary mechanism of the central stalk subunits to proton translocation. Functionally, this protein is part of the stalk that links CF(0) to CF(1). It either transmits conformational changes from CF(0) to CF(1) or is implicated in proton conduction. The chain is ATP synthase subunit delta from Aromatoleum aromaticum (strain DSM 19018 / LMG 30748 / EbN1) (Azoarcus sp. (strain EbN1)).